We begin with the raw amino-acid sequence, 336 residues long: tRNA N6-adenosine threonylcarbamoyltransferase (336 aa).

Positions 112 and 116 each coordinate Fe cation. Substrate-binding positions include 136–140, Asp169, Gly182, and Asn276; that span reads LVSGG. Fe cation is bound at residue Asp304.

It belongs to the KAE1 / TsaD family. Fe(2+) is required as a cofactor.

It localises to the cytoplasm. It carries out the reaction L-threonylcarbamoyladenylate + adenosine(37) in tRNA = N(6)-L-threonylcarbamoyladenosine(37) in tRNA + AMP + H(+). Functionally, required for the formation of a threonylcarbamoyl group on adenosine at position 37 (t(6)A37) in tRNAs that read codons beginning with adenine. Is involved in the transfer of the threonylcarbamoyl moiety of threonylcarbamoyl-AMP (TC-AMP) to the N6 group of A37, together with TsaE and TsaB. TsaD likely plays a direct catalytic role in this reaction. This chain is tRNA N6-adenosine threonylcarbamoyltransferase, found in Francisella tularensis subsp. novicida (strain U112).